Reading from the N-terminus, the 360-residue chain is uncharacterized protein (360 aa).

The tract at residues 1–33 is disordered; it reads MSGRRKGCSAATASSSSSSPPSRLPPLPGHARR.

This sequence belongs to the herpesviridae US22 family.

This is an uncharacterized protein from Human cytomegalovirus (strain AD169) (HHV-5).